The primary structure comprises 406 residues: Tyrosine--tRNA ligase (406 aa).

The short motif at 51–60 (PTAPDLHLGH) is the 'HIGH' region element. A 'KMSKS' region motif is present at residues 236–240 (KMSKS). Residue Lys239 coordinates ATP. An S4 RNA-binding domain is found at 345–405 (IWICKAMVEG…GKRKFLRLIV (61 aa)).

This sequence belongs to the class-I aminoacyl-tRNA synthetase family. TyrS type 2 subfamily. As to quaternary structure, homodimer.

Its subcellular location is the cytoplasm. The enzyme catalyses tRNA(Tyr) + L-tyrosine + ATP = L-tyrosyl-tRNA(Tyr) + AMP + diphosphate + H(+). Its function is as follows. Catalyzes the attachment of tyrosine to tRNA(Tyr) in a two-step reaction: tyrosine is first activated by ATP to form Tyr-AMP and then transferred to the acceptor end of tRNA(Tyr). The polypeptide is Tyrosine--tRNA ligase (Wolinella succinogenes (strain ATCC 29543 / DSM 1740 / CCUG 13145 / JCM 31913 / LMG 7466 / NCTC 11488 / FDC 602W) (Vibrio succinogenes)).